A 479-amino-acid chain; its full sequence is Poly(A) polymerase catalytic subunit (479 aa).

Residues aspartate 202 and aspartate 204 contribute to the active site. The Ca(2+) site is built by aspartate 202, aspartate 204, and aspartate 253.

It belongs to the poxviridae poly(A) polymerase catalytic subunit family. As to quaternary structure, heterodimer of a large (catalytic) subunit and a small (regulatory) subunit.

It catalyses the reaction RNA(n) + ATP = RNA(n)-3'-adenine ribonucleotide + diphosphate. In terms of biological role, polymerase that creates the 3'-poly(A) tail of mRNA's. The polypeptide is Poly(A) polymerase catalytic subunit (OPG063) (Homo sapiens (Human)).